We begin with the raw amino-acid sequence, 378 residues long: UPF0754 membrane protein BCAH187_A1042 (378 aa).

2 consecutive transmembrane segments (helical) span residues 1–21 and 357–377; these read MNIW…GGFT and YLGA…LLFL.

The protein belongs to the UPF0754 family.

The protein localises to the cell membrane. The chain is UPF0754 membrane protein BCAH187_A1042 from Bacillus cereus (strain AH187).